The chain runs to 380 residues: Two-component response regulator ORR28 (380 aa).

In terms of domain architecture, Response regulatory spans 13 to 130 (SAMVIDEDKC…TIQNLWQHLD (118 aa)). The residue at position 65 (D65) is a 4-aspartylphosphate. Residues 169-223 (RKYYLMWTPHLQKKFLHALEILGEGQISLMIMDVDNIDRKQISTHLQKHRLQLKK) constitute a DNA-binding region (myb-like GARP). The disordered stretch occupies residues 225–245 (LSKASFTKGSNEDTSNPSAKN). Polar residues predominate over residues 228-245 (ASFTKGSNEDTSNPSAKN).

The protein belongs to the ARR family. Type-B subfamily. Two-component system major event consists of a His-to-Asp phosphorelay between a sensor histidine kinase (HK) and a response regulator (RR). In plants, the His-to-Asp phosphorelay involves an additional intermediate named Histidine-containing phosphotransfer protein (HPt). This multistep phosphorelay consists of a His-Asp-His-Asp sequential transfer of a phosphate group between first a His and an Asp of the HK protein, followed by the transfer to a conserved His of the HPt protein and finally the transfer to an Asp in the receiver domain of the RR protein.

It localises to the nucleus. Functionally, transcriptional activator that binds specific DNA sequence. Functions as a response regulator involved in His-to-Asp phosphorelay signal transduction system. Phosphorylation of the Asp residue in the receiver domain activates the ability of the protein to promote the transcription of target genes. May directly activate some type-A response regulators in response to cytokinins. The sequence is that of Two-component response regulator ORR28 from Oryza sativa subsp. indica (Rice).